A 143-amino-acid polypeptide reads, in one-letter code: Large-conductance mechanosensitive channel (143 aa).

The next 2 helical transmembrane spans lie at 16–36 and 84–104; these read VIDL…VTAL and INTV…VKLI.

Belongs to the MscL family. In terms of assembly, homopentamer.

It localises to the cell inner membrane. Functionally, channel that opens in response to stretch forces in the membrane lipid bilayer. May participate in the regulation of osmotic pressure changes within the cell. This Xanthomonas campestris pv. campestris (strain 8004) protein is Large-conductance mechanosensitive channel.